Reading from the N-terminus, the 524-residue chain is PiggyBac transposable element-derived protein 5 (524 aa).

The disordered stretch occupies residues 30–117; that stretch reads DDVFGESGPD…DTGGPTRKMP (88 aa). The segment covering 47–59 has biased composition (low complexity); it reads STSAASRSSSAAS. A compositionally biased stretch (pro residues) spans 67–79; that stretch reads PGPPGAAPPPPRA. Residues 98 to 108 show a composition bias toward basic and acidic residues; the sequence is LRDRPPPRFED. Ser521 bears the Phosphoserine mark.

Its subcellular location is the nucleus. Functionally, transposase that mediates sequence-specific genomic rearrangements. Can induce genomic rearrangements that inactivate the HPRT1 gene. This is PiggyBac transposable element-derived protein 5 (PGBD5) from Homo sapiens (Human).